A 471-amino-acid chain; its full sequence is UDP-N-acetylmuramate--L-alanine ligase (471 aa).

Position 122-128 (122-128 (GTHGKTT)) interacts with ATP.

This sequence belongs to the MurCDEF family.

The protein resides in the cytoplasm. The enzyme catalyses UDP-N-acetyl-alpha-D-muramate + L-alanine + ATP = UDP-N-acetyl-alpha-D-muramoyl-L-alanine + ADP + phosphate + H(+). Its pathway is cell wall biogenesis; peptidoglycan biosynthesis. In terms of biological role, cell wall formation. The sequence is that of UDP-N-acetylmuramate--L-alanine ligase from Cutibacterium acnes (strain DSM 16379 / KPA171202) (Propionibacterium acnes).